Consider the following 396-residue polypeptide: Actin-related protein 6 (396 aa).

Thr-2 is subject to N-acetylthreonine. Lys-260 bears the N6-acetyllysine mark.

This sequence belongs to the actin family. ARP6 subfamily. In terms of assembly, component of the chromatin-remodeling SRCAP complex composed of at least SRCAP, DMAP1, RUVBL1, RUVBL2, ACTL6A, YEATS4, ACTR6 and ZNHIT1. Interacts with CBX1, CBX3 and CBX5.

The protein resides in the cytoplasm. The protein localises to the cytoskeleton. It is found in the nucleus. Its subcellular location is the nucleolus. In terms of biological role, required for formation and/or maintenance of proper nucleolar structure and function. Plays a dual role in the regulation of ribosomal DNA (rDNA) transcription. In the presence of high glucose, maintains active rDNA transcription through H2A.Z deposition and under glucose starvation, is required for the repression of rDNA transcription, and this function may be independent of H2A.Z. This chain is Actin-related protein 6 (ACTR6), found in Homo sapiens (Human).